Consider the following 293-residue polypeptide: tRNA pseudouridine synthase B (293 aa).

Residue Asp-39 is the Nucleophile of the active site.

This sequence belongs to the pseudouridine synthase TruB family. Type 1 subfamily.

The enzyme catalyses uridine(55) in tRNA = pseudouridine(55) in tRNA. In terms of biological role, responsible for synthesis of pseudouridine from uracil-55 in the psi GC loop of transfer RNAs. This chain is tRNA pseudouridine synthase B, found in Streptococcus thermophilus (strain CNRZ 1066).